The chain runs to 224 residues: Putative tyrosine-protein phosphatase OCA6 (224 aa).

The residue at position 2 (threonine 2) is a Phosphothreonine. One can recognise a Tyrosine-protein phosphatase domain in the interval 8–170 (QFSTVQPNLY…FNSEIEVDDL (163 aa)). Cysteine 114 acts as the Phosphocysteine intermediate in catalysis.

Belongs to the protein-tyrosine phosphatase family.

It is found in the cytoplasm. It catalyses the reaction O-phospho-L-tyrosyl-[protein] + H2O = L-tyrosyl-[protein] + phosphate. In terms of biological role, required for replication of Brome mosaic virus (BMV). This is Putative tyrosine-protein phosphatase OCA6 (OCA6) from Saccharomyces cerevisiae (strain ATCC 204508 / S288c) (Baker's yeast).